The chain runs to 581 residues: Arginine--tRNA ligase (581 aa).

Positions 131–141 (ANPTGPLHVGH) match the 'HIGH' region motif.

This sequence belongs to the class-I aminoacyl-tRNA synthetase family. As to quaternary structure, monomer.

It is found in the cytoplasm. It carries out the reaction tRNA(Arg) + L-arginine + ATP = L-arginyl-tRNA(Arg) + AMP + diphosphate. This Ruegeria pomeroyi (strain ATCC 700808 / DSM 15171 / DSS-3) (Silicibacter pomeroyi) protein is Arginine--tRNA ligase.